Here is a 288-residue protein sequence, read N- to C-terminus: ATP synthase gamma chain (288 aa).

It belongs to the ATPase gamma chain family. As to quaternary structure, F-type ATPases have 2 components, CF(1) - the catalytic core - and CF(0) - the membrane proton channel. CF(1) has five subunits: alpha(3), beta(3), gamma(1), delta(1), epsilon(1). CF(0) has three main subunits: a, b and c.

It is found in the cell membrane. Functionally, produces ATP from ADP in the presence of a proton gradient across the membrane. The gamma chain is believed to be important in regulating ATPase activity and the flow of protons through the CF(0) complex. The polypeptide is ATP synthase gamma chain (Shouchella clausii (strain KSM-K16) (Alkalihalobacillus clausii)).